Here is an 86-residue protein sequence, read N- to C-terminus: Small ribosomal subunit protein bS20 (86 aa).

The segment at 1–27 is disordered; it reads MANNKSAKKRAIQAEKRRQHNASRRSM.

This sequence belongs to the bacterial ribosomal protein bS20 family.

Functionally, binds directly to 16S ribosomal RNA. The chain is Small ribosomal subunit protein bS20 from Vibrio vulnificus (strain CMCP6).